A 126-amino-acid chain; its full sequence is MAEITKADVVAFIEKMTVLELAELVKELEEKFGVSAAAPVAVAAAAPAAAAEAAEEKTEFDVILKSAGANKINVIKVVRTLTSLGLKEAKDLVDGAPSPVKTGISKAEAEEAQKQLVEAGAEVEIK.

The protein belongs to the bacterial ribosomal protein bL12 family. Homodimer. Part of the ribosomal stalk of the 50S ribosomal subunit. Forms a multimeric L10(L12)X complex, where L10 forms an elongated spine to which 2 to 4 L12 dimers bind in a sequential fashion. Binds GTP-bound translation factors.

Forms part of the ribosomal stalk which helps the ribosome interact with GTP-bound translation factors. Is thus essential for accurate translation. This chain is Large ribosomal subunit protein bL12, found in Trichlorobacter lovleyi (strain ATCC BAA-1151 / DSM 17278 / SZ) (Geobacter lovleyi).